The primary structure comprises 325 residues: Golgi to ER traffic protein 4 homolog A (325 aa).

Disordered stretches follow at residues 1–22 (MAAA…GGVQ) and 306–325 (SGED…IELD). Residues 307–317 (GEDDDVEDGQE) show a composition bias toward acidic residues.

This sequence belongs to the GET4 family. As to quaternary structure, component of the bag6/bat3 complex.

The protein localises to the cytoplasm. It localises to the cytosol. As part of a cytosolic protein quality control complex, the bag6/bat3 complex, maintains misfolded and hydrophobic patches-containing proteins in a soluble state and participates in their proper delivery to the endoplasmic reticulum or alternatively can promote their sorting to the proteasome where they undergo degradation. The bag6/bat3 complex is involved in the post-translational delivery of tail-anchored/type II transmembrane proteins to the endoplasmic reticulum membrane. Similarly, the bag6/bat3 complex also functions as a sorting platform for proteins of the secretory pathway that are mislocalized to the cytosol either delivering them to the proteasome for degradation or to the endoplasmic reticulum. The bag6/bat3 complex also plays a role in the endoplasmic reticulum-associated degradation (ERAD), a quality control mechanism that eliminates unwanted proteins of the endoplasmic reticulum through their retrotranslocation to the cytosol and their targeting to the proteasome. It maintains these retrotranslocated proteins in an unfolded yet soluble state condition in the cytosol to ensure their proper delivery to the proteasome. The sequence is that of Golgi to ER traffic protein 4 homolog A (get4-a) from Xenopus laevis (African clawed frog).